The following is a 481-amino-acid chain: Glutamate--tRNA ligase (481 aa).

A 'HIGH' region motif is present at residues 10–20 (PSPTGHLHIGN). A 'KMSKS' region motif is present at residues 251-255 (KLSKR). Lysine 254 contacts ATP.

This sequence belongs to the class-I aminoacyl-tRNA synthetase family. Glutamate--tRNA ligase type 1 subfamily. As to quaternary structure, monomer.

Its subcellular location is the cytoplasm. The enzyme catalyses tRNA(Glu) + L-glutamate + ATP = L-glutamyl-tRNA(Glu) + AMP + diphosphate. In terms of biological role, catalyzes the attachment of glutamate to tRNA(Glu) in a two-step reaction: glutamate is first activated by ATP to form Glu-AMP and then transferred to the acceptor end of tRNA(Glu). The sequence is that of Glutamate--tRNA ligase from Exiguobacterium sibiricum (strain DSM 17290 / CCUG 55495 / CIP 109462 / JCM 13490 / 255-15).